Reading from the N-terminus, the 626-residue chain is 4-hydroxy-3-methylbut-2-en-1-yl diphosphate synthase (flavodoxin) (626 aa).

Cys521, Cys524, Cys555, and Glu562 together coordinate [4Fe-4S] cluster.

Belongs to the IspG family. The cofactor is [4Fe-4S] cluster.

The catalysed reaction is (2E)-4-hydroxy-3-methylbut-2-enyl diphosphate + oxidized [flavodoxin] + H2O + 2 H(+) = 2-C-methyl-D-erythritol 2,4-cyclic diphosphate + reduced [flavodoxin]. It functions in the pathway isoprenoid biosynthesis; isopentenyl diphosphate biosynthesis via DXP pathway; isopentenyl diphosphate from 1-deoxy-D-xylulose 5-phosphate: step 5/6. Its function is as follows. Converts 2C-methyl-D-erythritol 2,4-cyclodiphosphate (ME-2,4cPP) into 1-hydroxy-2-methyl-2-(E)-butenyl 4-diphosphate. The protein is 4-hydroxy-3-methylbut-2-en-1-yl diphosphate synthase (flavodoxin) of Bacteroides fragilis (strain ATCC 25285 / DSM 2151 / CCUG 4856 / JCM 11019 / LMG 10263 / NCTC 9343 / Onslow / VPI 2553 / EN-2).